A 304-amino-acid polypeptide reads, in one-letter code: Aspartate carbamoyltransferase catalytic subunit (304 aa).

Residues Arg-49 and Thr-50 each coordinate carbamoyl phosphate. Lys-77 is a binding site for L-aspartate. 3 residues coordinate carbamoyl phosphate: Arg-99, His-127, and Gln-130. L-aspartate contacts are provided by Arg-160 and Arg-211. Carbamoyl phosphate contacts are provided by Ala-250 and Pro-251.

The protein belongs to the aspartate/ornithine carbamoyltransferase superfamily. ATCase family. In terms of assembly, heterododecamer (2C3:3R2) of six catalytic PyrB chains organized as two trimers (C3), and six regulatory PyrI chains organized as three dimers (R2).

The enzyme catalyses carbamoyl phosphate + L-aspartate = N-carbamoyl-L-aspartate + phosphate + H(+). Its pathway is pyrimidine metabolism; UMP biosynthesis via de novo pathway; (S)-dihydroorotate from bicarbonate: step 2/3. In terms of biological role, catalyzes the condensation of carbamoyl phosphate and aspartate to form carbamoyl aspartate and inorganic phosphate, the committed step in the de novo pyrimidine nucleotide biosynthesis pathway. This is Aspartate carbamoyltransferase catalytic subunit from Bacillus velezensis (strain DSM 23117 / BGSC 10A6 / LMG 26770 / FZB42) (Bacillus amyloliquefaciens subsp. plantarum).